A 141-amino-acid polypeptide reads, in one-letter code: Large ribosomal subunit protein uL16 (141 aa).

The interval 1 to 23 is disordered; it reads MLMPKRTKYRKQMKGRNRGKAHR.

It belongs to the universal ribosomal protein uL16 family. In terms of assembly, part of the 50S ribosomal subunit.

Functionally, binds 23S rRNA and is also seen to make contacts with the A and possibly P site tRNAs. The polypeptide is Large ribosomal subunit protein uL16 (Helicobacter pylori (strain P12)).